Reading from the N-terminus, the 525-residue chain is CBL-interacting protein kinase 21 (525 aa).

The Protein kinase domain occupies 87 to 342 (YEMGRALGEG…ITGIRAHEWF (256 aa)). Residues 93–101 (LGEGHFGKV) and Lys116 contribute to the ATP site. Residue Asp210 is the Proton acceptor of the active site. Residues 228-257 (DFGLSALPQNQRKDGLLHTTCGSPNYIAPE) are activation loop. Positions 372 to 401 (DIETSPAISQINAFQLIGMSSCLDLSGFFE) constitute an NAF domain. The interval 407–436 (ERKIRFVSNYSPTSLFEKIESTVTEKGFQV) is PPI.

The protein belongs to the protein kinase superfamily. CAMK Ser/Thr protein kinase family. SNF1 subfamily. The cofactor is Mn(2+).

The enzyme catalyses L-seryl-[protein] + ATP = O-phospho-L-seryl-[protein] + ADP + H(+). It carries out the reaction L-threonyl-[protein] + ATP = O-phospho-L-threonyl-[protein] + ADP + H(+). In terms of biological role, CIPK serine-threonine protein kinases interact with CBL proteins. Binding of a CBL protein to the regulatory NAF domain of CIPK protein lead to the activation of the kinase in a calcium-dependent manner. The protein is CBL-interacting protein kinase 21 (CIPK21) of Oryza sativa subsp. japonica (Rice).